The chain runs to 715 residues: 1,4-alpha-glucan branching enzyme GlgB (715 aa).

Asp-399 serves as the catalytic Nucleophile. Glu-452 (proton donor) is an active-site residue.

The protein belongs to the glycosyl hydrolase 13 family. GlgB subfamily. In terms of assembly, monomer.

The catalysed reaction is Transfers a segment of a (1-&gt;4)-alpha-D-glucan chain to a primary hydroxy group in a similar glucan chain.. It functions in the pathway glycan biosynthesis; glycogen biosynthesis. In terms of biological role, catalyzes the formation of the alpha-1,6-glucosidic linkages in glycogen by scission of a 1,4-alpha-linked oligosaccharide from growing alpha-1,4-glucan chains and the subsequent attachment of the oligosaccharide to the alpha-1,6 position. This chain is 1,4-alpha-glucan branching enzyme GlgB, found in Rhodopseudomonas palustris (strain BisA53).